Here is a 398-residue protein sequence, read N- to C-terminus: MSSMSVVDNVQLVDVNKKTHPQAILIQNDKFNNENLNDSVLSDIDSNEIVKLQYKTRSNDGNAVYAELPPNQLIDFEVGPVMQNSSNFSFSEEAVNQPSIFQRVSEFFAPIYAFLKDLLPSFDSITNAAKSVEDFGVSAYQTGKDIVCDSVDAIGDMGKSAFDYTVDFGKSIFSAVVNFFSGDSSTLDLGEENTEKKFEGSIPSNLHRVSREIHQSLMSNEISKPYWKSLNKIIGDNQQVSTGKKFFNRFMSLRNTSRLDDSFIFEGEHSILQINGQQVSKYSPKTMLDDFKTAIPDLASRQLISSFSHQGIFSQPYIELFSEHPDLVKFKPKDSQFSYVVHEVEDGVFQFTATSQADLESSYETSDHKKYNAFGVQVSMTLSKDKSPEDVEYSYYLR.

This is an uncharacterized protein from Buchnera aphidicola subsp. Baizongia pistaciae (strain Bp).